Consider the following 829-residue polypeptide: Leucine--tRNA ligase (829 aa).

A 'HIGH' region motif is present at residues Pro40–His50. Positions Lys581–Ser585 match the 'KMSKS' region motif. Lys584 is a binding site for ATP.

This sequence belongs to the class-I aminoacyl-tRNA synthetase family.

The protein localises to the cytoplasm. The enzyme catalyses tRNA(Leu) + L-leucine + ATP = L-leucyl-tRNA(Leu) + AMP + diphosphate. This is Leucine--tRNA ligase from Nitratidesulfovibrio vulgaris (strain ATCC 29579 / DSM 644 / CCUG 34227 / NCIMB 8303 / VKM B-1760 / Hildenborough) (Desulfovibrio vulgaris).